We begin with the raw amino-acid sequence, 423 residues long: GTPase HflX (423 aa).

One can recognise a Hflx-type G domain in the interval 201-363 (IQLALVGYTN…KIEQALKGMM (163 aa)). GTP is bound by residues 207-214 (GYTNAGKS), 232-236 (FATLD), 254-257 (DTVG), 320-323 (NKAD), and 341-343 (SAY). Ser214 and Thr234 together coordinate Mg(2+).

The protein belongs to the TRAFAC class OBG-HflX-like GTPase superfamily. HflX GTPase family. Monomer. Associates with the 50S ribosomal subunit. Mg(2+) serves as cofactor.

The protein localises to the cytoplasm. In terms of biological role, GTPase that associates with the 50S ribosomal subunit and may have a role during protein synthesis or ribosome biogenesis. The protein is GTPase HflX of Alkalihalophilus pseudofirmus (strain ATCC BAA-2126 / JCM 17055 / OF4) (Bacillus pseudofirmus).